The chain runs to 204 residues: N-(5'-phosphoribosyl)anthranilate isomerase (204 aa).

This sequence belongs to the TrpF family.

It carries out the reaction N-(5-phospho-beta-D-ribosyl)anthranilate = 1-(2-carboxyphenylamino)-1-deoxy-D-ribulose 5-phosphate. The protein operates within amino-acid biosynthesis; L-tryptophan biosynthesis; L-tryptophan from chorismate: step 3/5. This Bacillus thuringiensis (strain Al Hakam) protein is N-(5'-phosphoribosyl)anthranilate isomerase.